Here is a 189-residue protein sequence, read N- to C-terminus: Glycerol-3-phosphate acyltransferase (189 aa).

The next 5 helical transmembrane spans lie at 1–21 (MFWL…AIVL), 50–70 (KLAI…VLLA), 77–97 (LHAQ…PLYF), 111–131 (MLMA…LLTF), and 151–171 (LLAW…VMIV).

Belongs to the PlsY family. As to quaternary structure, probably interacts with PlsX.

It localises to the cell inner membrane. The enzyme catalyses an acyl phosphate + sn-glycerol 3-phosphate = a 1-acyl-sn-glycero-3-phosphate + phosphate. It participates in lipid metabolism; phospholipid metabolism. Its function is as follows. Catalyzes the transfer of an acyl group from acyl-phosphate (acyl-PO(4)) to glycerol-3-phosphate (G3P) to form lysophosphatidic acid (LPA). This enzyme utilizes acyl-phosphate as fatty acyl donor, but not acyl-CoA or acyl-ACP. The protein is Glycerol-3-phosphate acyltransferase of Pseudomonas putida (strain ATCC 47054 / DSM 6125 / CFBP 8728 / NCIMB 11950 / KT2440).